The primary structure comprises 87 residues: Large ribosomal subunit protein bL27 (87 aa).

Belongs to the bacterial ribosomal protein bL27 family.

The chain is Large ribosomal subunit protein bL27 from Pseudarthrobacter chlorophenolicus (strain ATCC 700700 / DSM 12829 / CIP 107037 / JCM 12360 / KCTC 9906 / NCIMB 13794 / A6) (Arthrobacter chlorophenolicus).